Reading from the N-terminus, the 372-residue chain is Cytochrome b (372 aa).

4 helical membrane-spanning segments follow: residues 25–45 (FGSM…FLAL), 69–90 (WIMQ…YIHI), 105–125 (WLSG…GYVL), and 170–190 (FFAL…IHII). Heme b is bound by residues histidine 75 and histidine 89. 2 residues coordinate heme b: histidine 174 and histidine 188. Histidine 193 serves as a coordination point for a ubiquinone. 4 consecutive transmembrane segments (helical) span residues 218–238 (YKDM…LSFA), 280–300 (LGGT…PFTH), 312–332 (LSQI…WTAS), and 339–358 (FITI…ITTP).

It belongs to the cytochrome b family. In terms of assembly, the cytochrome bc1 complex contains 3 respiratory subunits (MT-CYB, CYC1 and UQCRFS1), 2 core proteins (UQCRC1 and UQCRC2) and probably 6 low-molecular weight proteins. Requires heme b as cofactor.

It localises to the mitochondrion inner membrane. Functionally, component of the ubiquinol-cytochrome c reductase complex (complex III or cytochrome b-c1 complex) that is part of the mitochondrial respiratory chain. The b-c1 complex mediates electron transfer from ubiquinol to cytochrome c. Contributes to the generation of a proton gradient across the mitochondrial membrane that is then used for ATP synthesis. This chain is Cytochrome b (MT-CYB), found in Naja nivea (Cape cobra).